Consider the following 413-residue polypeptide: Putative competence-damage inducible protein (413 aa).

Belongs to the CinA family.

This chain is Putative competence-damage inducible protein, found in Acetivibrio thermocellus (strain ATCC 27405 / DSM 1237 / JCM 9322 / NBRC 103400 / NCIMB 10682 / NRRL B-4536 / VPI 7372) (Clostridium thermocellum).